Reading from the N-terminus, the 135-residue chain is Classical arabinogalactan protein 4 (135 aa).

The signal sequence occupies residues 1–21 (MGSKIVQVFLMLALFATSALA). Gln22 carries the post-translational modification Pyrrolidone carboxylic acid. The segment at 22-112 (QAPAPTPTAT…PSDASPAPSA (91 aa)) is disordered. Pro24, Pro26, Pro28, Pro32, Pro33, Pro34, Pro37, Pro38, and Pro39 each carry 4-hydroxyproline. O-linked (Ara...) hydroxyproline glycans are attached at residues Pro24, Pro26, Pro28, Pro32, Pro33, Pro34, Pro37, Pro38, and Pro39. The segment covering 25-76 (APTPTATPPPATPPPVATPPPVATPPPAATPAPATPPPAATPAPATTPPSVA) has biased composition (pro residues). A compositionally biased stretch (low complexity) spans 96-112 (SPSSAPGPSDASPAPSA). A lipid anchor (GPI-anchor amidated serine) is attached at Ser111. A propeptide spans 112 to 135 (AAFSNKAFFAGTAFAAIMYAAVLA) (removed in mature form).

Belongs to the classical AGP family. O-glycosylated on hydroxyprolines; noncontiguous hydroxylproline residues are glycosylated with arabinogalactan. As to expression, highly expressed in roots, flowers and leaves.

It is found in the cell membrane. Proteoglycan that seems to be implicated in diverse developmental roles such as differentiation, cell-cell recognition, embryogenesis and programmed cell death. The polypeptide is Classical arabinogalactan protein 4 (AGP4) (Arabidopsis thaliana (Mouse-ear cress)).